The sequence spans 805 residues: RFX-like transcription factor daf-19 (805 aa).

The span at 1-14 (MTNEEPVPSTSSVL) shows a compositional bias: polar residues. A disordered region spans residues 1–113 (MTNEEPVPST…TPRKKMEPED (113 aa)). Positions 19–92 (KNVKIETPSR…DSKSLSKETH (74 aa)) are enriched in basic and acidic residues. Over residues 93 to 104 (NTISTRSSSSGT) the composition is skewed to polar residues. The segment at residues 260–334 (TVNWLFENYE…YHYYGIRLKD (75 aa)) is a DNA-binding region (RFX-type winged-helix).

The protein belongs to the RFX family. Ciliated sensory neurons. As to expression, expressed in the male tail HOB and RnB neurons but not in male-specific CEM head neurons or other ciliated neurons.

The protein localises to the nucleus. In terms of biological role, probable transcription factor. May regulate some genes of ciliated sensory neurons. May activate the expression of the shared components of sensory cilia, but not the cell-type-specific expression. Together with transcription factor atf-7, involved in regulation of the serotonergic response of ADF neurons to pathogenic food. Involved in male mating behavior; may play a role in functional specialization of PKD ciliated sensory neurons. The chain is RFX-like transcription factor daf-19 from Caenorhabditis elegans.